The sequence spans 306 residues: Dermonecrotic toxin LiSicTox-alphaIA1a (306 aa).

Residues 1-18 (MLPYIVLVLGCWSVLSQA) form the signal peptide. A propeptide spanning residues 19–26 (AQTDDEER) is cleaved from the precursor. H38 is a catalytic residue. The Mg(2+) site is built by E58 and D60. H74 serves as the catalytic Nucleophile. Disulfide bonds link C78–C84 and C80–C223. D118 serves as a coordination point for Mg(2+).

The protein belongs to the arthropod phospholipase D family. Class II subfamily. Class IIa sub-subfamily. It depends on Mg(2+) as a cofactor. As to expression, expressed by the venom gland.

Its subcellular location is the secreted. The enzyme catalyses an N-(acyl)-sphingosylphosphocholine = an N-(acyl)-sphingosyl-1,3-cyclic phosphate + choline. It catalyses the reaction an N-(acyl)-sphingosylphosphoethanolamine = an N-(acyl)-sphingosyl-1,3-cyclic phosphate + ethanolamine. The catalysed reaction is a 1-acyl-sn-glycero-3-phosphocholine = a 1-acyl-sn-glycero-2,3-cyclic phosphate + choline. It carries out the reaction a 1-acyl-sn-glycero-3-phosphoethanolamine = a 1-acyl-sn-glycero-2,3-cyclic phosphate + ethanolamine. The enzyme catalyses 1-hexadecanoyl-sn-glycero-3-phosphocholine = 1-hexadecanoyl-sn-glycero-2,3-cyclic phosphate + choline. Catalytic activity and hemolysis are inhibited by divalent ion chelators (1,10-phenanthroline, EDTA, and EGTA). Its function is as follows. Dermonecrotic toxins cleave the phosphodiester linkage between the phosphate and headgroup of certain phospholipids (sphingolipid and lysolipid substrates), forming an alcohol (often choline) and a cyclic phosphate. This toxin acts on sphingomyelin (SM) with high activity. It discriminate between the number of carbon atoms in the substrates, since it prefers SM with six carbons in the fatty acid chain (SM6:0) to other SMs (SM12:0 &gt; SM16:0 &gt; SM18:0 &gt; SM2:0 &gt; SM24:0). It also acts on lysophosphatidylcholine (LPC) (LPC16:0 = LPC12:0 &gt; LPC18:0), and lyso-platelet activating factor (LPAF, an alkyl-LPC) but not on phosphatidylcholine (PC). It may also act on ceramide phosphoethanolamine (CPE), lysophosphatidylcholine (LPC) and lysophosphatidylethanolamine (LPE), but not on lysophosphatidylserine (LPS), and lysophosphatidylglycerol (LPG). It acts by transphosphatidylation, releasing exclusively cyclic phosphate products as second products. In vivo, it induces dermonecrosis, vascular permeability, platelet aggregation, inflammatory response, edema and cytotoxicity against renal epithelial cells. It causes direct nephrotoxicity and is directly toxic to liver. It also induces hemolysis in a complement-dependent manner as well as in a complement-independent manner. The hemolysis provoked in a complement-independent manner is composed of several steps. The toxin binds to erythrocyte membranes, hydrolyzes membrane phospholipids (SM and LPC) thus generating metabolism products that cause hemolysis, probably by provoking an increase of calcium inside cells. The calcium influx is due to the opening of L-type calcium channels, since L-type calcium channel blockers inhibit calcium influx. Is lethal to mice when intraperitoneally injected. This Loxosceles intermedia (Brown spider) protein is Dermonecrotic toxin LiSicTox-alphaIA1a.